Reading from the N-terminus, the 393-residue chain is MTRPVTGKDLMIVNMGPHHPSMHGVLRLIVTLDGEDVVDCEPILGYLHRGMEKIAENRAIIQYLPYVTRWDYLATMFTEAITVNGPEQLGNIQVPKRASYIRVIMLELSRIASHLLWLGPFMADIGAQTPFFYIFREREFVYDLFEAATGMRMMHNFFRIGGIAADLPYGWIDKCLDFCDYFLTEVVEYQKLITRNPIFLERVEGVGIIGGEEAINWGLSGPMLRASGIPWDLRKVDRYESYDEFEWEIQWQKQGDSLARYLVRLSEMTESIKIIQQALEGLPGGPYENLESRGFDRKRNPEWNDFEYRFISKKPSPTFELSKQELYVRVEAPKGELGIFLIGDQSGFPWRWKIRPPGFINLQILPELVKRMKLADIMTILGSIDIIMGEVDR.

The protein belongs to the complex I 49 kDa subunit family. As to quaternary structure, NDH is composed of at least 16 different subunits, 5 of which are encoded in the nucleus.

It is found in the plastid. The protein localises to the chloroplast thylakoid membrane. It carries out the reaction a plastoquinone + NADH + (n+1) H(+)(in) = a plastoquinol + NAD(+) + n H(+)(out). It catalyses the reaction a plastoquinone + NADPH + (n+1) H(+)(in) = a plastoquinol + NADP(+) + n H(+)(out). Functionally, NDH shuttles electrons from NAD(P)H:plastoquinone, via FMN and iron-sulfur (Fe-S) centers, to quinones in the photosynthetic chain and possibly in a chloroplast respiratory chain. The immediate electron acceptor for the enzyme in this species is believed to be plastoquinone. Couples the redox reaction to proton translocation, and thus conserves the redox energy in a proton gradient. The protein is NAD(P)H-quinone oxidoreductase subunit H, chloroplastic of Lobularia maritima (Sweet alyssum).